We begin with the raw amino-acid sequence, 178 residues long: Large ribosomal subunit protein uL6 (178 aa).

The protein belongs to the universal ribosomal protein uL6 family. In terms of assembly, part of the 50S ribosomal subunit.

This protein binds to the 23S rRNA, and is important in its secondary structure. It is located near the subunit interface in the base of the L7/L12 stalk, and near the tRNA binding site of the peptidyltransferase center. This is Large ribosomal subunit protein uL6 from Streptococcus pyogenes serotype M3 (strain ATCC BAA-595 / MGAS315).